Reading from the N-terminus, the 333-residue chain is Tetraacyldisaccharide 4'-kinase (333 aa).

55–62 lines the ATP pocket; it reads TAGGNGKT.

Belongs to the LpxK family.

The catalysed reaction is a lipid A disaccharide + ATP = a lipid IVA + ADP + H(+). Its pathway is glycolipid biosynthesis; lipid IV(A) biosynthesis; lipid IV(A) from (3R)-3-hydroxytetradecanoyl-[acyl-carrier-protein] and UDP-N-acetyl-alpha-D-glucosamine: step 6/6. Transfers the gamma-phosphate of ATP to the 4'-position of a tetraacyldisaccharide 1-phosphate intermediate (termed DS-1-P) to form tetraacyldisaccharide 1,4'-bis-phosphate (lipid IVA). In Pectobacterium atrosepticum (strain SCRI 1043 / ATCC BAA-672) (Erwinia carotovora subsp. atroseptica), this protein is Tetraacyldisaccharide 4'-kinase.